Reading from the N-terminus, the 409-residue chain is Glycosyltransferase GtfE (409 aa).

Belongs to the glycosyltransferase 28 family.

It functions in the pathway antibiotic biosynthesis; vancomycin biosynthesis. D-glucosyltransferase that acts on the aglycone core, transferring D-glucose to the phenolic hydroxyl of OH-Phegly(4) to form a devancoaminyl-vancomycin (DVV) intermediate in the biosynthesis of glycopeptide antibiotic vancomycin. Also able to glycosylate A47934, an antibiotic with a teicoplanin-like heptapeptide, but lacking sugar residues. The protein is Glycosyltransferase GtfE (gtfE) of Amycolatopsis orientalis (Nocardia orientalis).